We begin with the raw amino-acid sequence, 157 residues long: dCTP deaminase (157 aa).

Residues Arg79–Arg84, Asp95, Gln124, and Tyr138 each bind dCTP.

This sequence belongs to the dCTP deaminase family. Homotrimer.

The catalysed reaction is dCTP + H2O + H(+) = dUTP + NH4(+). It participates in pyrimidine metabolism; dUMP biosynthesis; dUMP from dCTP (dUTP route): step 1/2. In terms of biological role, catalyzes the deamination of dCTP to dUTP. The sequence is that of dCTP deaminase from Thermococcus gammatolerans (strain DSM 15229 / JCM 11827 / EJ3).